A 393-amino-acid polypeptide reads, in one-letter code: Stearoyl-[acyl-carrier-protein] 9-desaturase, chloroplastic (393 aa).

The transit peptide at 1-31 (MASMVAFRPEAFLCFSPPKTTRSTRSPRISM) directs the protein to the chloroplast. Positions 135, 173, 176, 226, 259, and 262 each coordinate Fe cation.

It belongs to the fatty acid desaturase type 2 family. As to quaternary structure, homodimer. The cofactor is Fe(2+).

The protein resides in the plastid. It localises to the chloroplast. It carries out the reaction octadecanoyl-[ACP] + 2 reduced [2Fe-2S]-[ferredoxin] + O2 + 2 H(+) = (9Z)-octadecenoyl-[ACP] + 2 oxidized [2Fe-2S]-[ferredoxin] + 2 H2O. The protein operates within lipid metabolism; fatty acid metabolism. Its function is as follows. Converts stearoyl-ACP to oleoyl-ACP by introduction of a cis double bond between carbons 9 and 10 of the acyl chain. The sequence is that of Stearoyl-[acyl-carrier-protein] 9-desaturase, chloroplastic from Elaeis guineensis var. tenera (Oil palm).